The chain runs to 394 residues: NADH-quinone oxidoreductase subunit D 2 (394 aa).

The protein belongs to the complex I 49 kDa subunit family. NDH-1 is composed of 14 different subunits. Subunits NuoB, C, D, E, F, and G constitute the peripheral sector of the complex.

It localises to the cell membrane. The enzyme catalyses a quinone + NADH + 5 H(+)(in) = a quinol + NAD(+) + 4 H(+)(out). In terms of biological role, NDH-1 shuttles electrons from NADH, via FMN and iron-sulfur (Fe-S) centers, to quinones in the respiratory chain. The immediate electron acceptor for the enzyme in this species is believed to be a menaquinone. Couples the redox reaction to proton translocation (for every two electrons transferred, four hydrogen ions are translocated across the cytoplasmic membrane), and thus conserves the redox energy in a proton gradient. This is NADH-quinone oxidoreductase subunit D 2 from Streptomyces griseus subsp. griseus (strain JCM 4626 / CBS 651.72 / NBRC 13350 / KCC S-0626 / ISP 5235).